Consider the following 269-residue polypeptide: E3 ubiquitin-protein ligase complex slx8-rfp subunit slx8 (269 aa).

Residues 1–10 (MPPAHKRDTN) are compositionally biased toward basic and acidic residues. Disordered stretches follow at residues 1-75 (MPPA…LNRA) and 166-196 (PRKQKFEQGKNPSTTNAEIEKEEPSKKQVVP). Polar residues predominate over residues 60–70 (PSGTTSENESL). The RING-type zinc finger occupies 206–247 (CVICLDSPENLSCTPCGHIFCNFCILSALGTTAATQKCPVCR).

In terms of assembly, part of an E3 ubiquitin complex including rfp1, rfp2 and slx8. Interacts with rfp1 and rfp2.

It is found in the nucleus. It carries out the reaction S-ubiquitinyl-[E2 ubiquitin-conjugating enzyme]-L-cysteine + [acceptor protein]-L-lysine = [E2 ubiquitin-conjugating enzyme]-L-cysteine + N(6)-ubiquitinyl-[acceptor protein]-L-lysine.. It participates in protein modification; protein ubiquitination. Mediates ubiquitination and subsequent desumoylation/degradation of sumoylated proteins and proteins containing SUMO-like domains. Acts as a critical suppressor of gross chromosomal rearrangements (GCRs) during normal cell cycle progression. Involved in stabilizing, restarting or resolving transiently stalled replication forks. Prevents accumulation of DNA damage during cell cycle progression. The sequence is that of E3 ubiquitin-protein ligase complex slx8-rfp subunit slx8 (slx8) from Schizosaccharomyces pombe (strain 972 / ATCC 24843) (Fission yeast).